We begin with the raw amino-acid sequence, 238 residues long: 2-C-methyl-D-erythritol 4-phosphate cytidylyltransferase (238 aa).

The protein belongs to the IspD/TarI cytidylyltransferase family. IspD subfamily.

It carries out the reaction 2-C-methyl-D-erythritol 4-phosphate + CTP + H(+) = 4-CDP-2-C-methyl-D-erythritol + diphosphate. The protein operates within isoprenoid biosynthesis; isopentenyl diphosphate biosynthesis via DXP pathway; isopentenyl diphosphate from 1-deoxy-D-xylulose 5-phosphate: step 2/6. In terms of biological role, catalyzes the formation of 4-diphosphocytidyl-2-C-methyl-D-erythritol from CTP and 2-C-methyl-D-erythritol 4-phosphate (MEP). In Shewanella amazonensis (strain ATCC BAA-1098 / SB2B), this protein is 2-C-methyl-D-erythritol 4-phosphate cytidylyltransferase.